A 660-amino-acid chain; its full sequence is DNA mismatch repair protein MutL (660 aa).

A compositionally biased stretch (polar residues) spans Ser341 to Ser355. Disordered regions lie at residues Ser341–Glu362 and Ala378–Arg398. Basic and acidic residues predominate over residues Glu385 to Arg398.

Belongs to the DNA mismatch repair MutL/HexB family.

In terms of biological role, this protein is involved in the repair of mismatches in DNA. It is required for dam-dependent methyl-directed DNA mismatch repair. May act as a 'molecular matchmaker', a protein that promotes the formation of a stable complex between two or more DNA-binding proteins in an ATP-dependent manner without itself being part of a final effector complex. The chain is DNA mismatch repair protein MutL from Heliobacterium modesticaldum (strain ATCC 51547 / Ice1).